The chain runs to 274 residues: Undecaprenyl-diphosphatase (274 aa).

The next 8 membrane-spanning stretches (helical) occupy residues 1–21 (MDWF…FLPI), 48–68 (VVIQ…DFAG), 84–104 (LGVI…GDVI), 108–128 (LFRP…MWVI), 143–163 (IGLG…LWPG), 187–207 (FSFY…FIKS), 214–234 (IGLL…YLAI), and 254–274 (VIFG…NGGL).

This sequence belongs to the UppP family.

It localises to the cell membrane. It carries out the reaction di-trans,octa-cis-undecaprenyl diphosphate + H2O = di-trans,octa-cis-undecaprenyl phosphate + phosphate + H(+). Functionally, catalyzes the dephosphorylation of undecaprenyl diphosphate (UPP). Confers resistance to bacitracin. This Deinococcus geothermalis (strain DSM 11300 / CIP 105573 / AG-3a) protein is Undecaprenyl-diphosphatase.